Consider the following 387-residue polypeptide: Diels-Alderase ORF3 (387 aa).

The protein belongs to the Diels-Alderase family.

Its pathway is secondary metabolite biosynthesis. Functionally, diels-Alderase; part of the gene cluster that mediates the biosynthesis of a tyrosine-derived cytochalasan acting as a fungal signal recognized by resistant rice plants and leads to avirulence in Pi33 resistant rice cultivars. The first step in the pathway is catalyzed by the hybrid PKS-NRPS ACE1, assisted by the enoyl reductase RAP1, that are responsible for fusion of the tyrosine precursor and the polyketide backbone. The polyketide synthase module (PKS) of ACE1 is responsible for the synthesis of the polyketide backbone and the downstream nonribosomal peptide synthetase (NRPS) amidates the carboxyl end of the polyketide with the tyrosine precursor. Because ACE1 lacks a designated enoylreductase (ER) domain, the required activity is provided the enoyl reductase RAP1. Reduction by the hydrolyase ORFZ, followed by dehydration and intra-molecular Diels-Alder cyclization by the Diels-Alderase ORF3 then yield the required isoindolone-fused macrocycle. A number of oxidative steps catalyzed by the tailoring enzymes identified within the cluster, including cytochrome P450 monooxygenases CYP1 to CYP4, the FAD-linked oxidoreductase OXR2 and the short-chain dehydrogenase/reductase OXR1, are further required to afford the final cytochalasans that confer avirulence and which have still to be identified. The monooxygenase CYP1 has been shown to be a site-selective C-18 hydroxylase whereas the function of CYP3 is the site-selective epoxidation of the C-6/C-7 olefin that is present in some intermediate compounds. Finally, SYN2 and RAP2 are not required for avirulence in Pi33 resistant rice cultivars. The chain is Diels-Alderase ORF3 from Pyricularia oryzae (strain 70-15 / ATCC MYA-4617 / FGSC 8958) (Rice blast fungus).